The following is a 774-amino-acid chain: 5-methyltetrahydropteroyltriglutamate--homocysteine methyltransferase (774 aa).

5-methyltetrahydropteroyltri-L-glutamate contacts are provided by residues 23 to 26 (RELK) and Lys123. Residues 446 to 448 (IGS) and Glu499 each bind L-homocysteine. L-methionine contacts are provided by residues 446–448 (IGS) and Glu499. Residues 530 to 531 (RC) and Trp576 contribute to the 5-methyltetrahydropteroyltri-L-glutamate site. Residue Asp614 coordinates L-homocysteine. Residue Asp614 coordinates L-methionine. 5-methyltetrahydropteroyltri-L-glutamate is bound at residue Glu620. Zn(2+) contacts are provided by His656, Cys658, and Glu680. Catalysis depends on His709, which acts as the Proton donor. Position 741 (Cys741) interacts with Zn(2+).

This sequence belongs to the vitamin-B12 independent methionine synthase family. It depends on Zn(2+) as a cofactor.

It carries out the reaction 5-methyltetrahydropteroyltri-L-glutamate + L-homocysteine = tetrahydropteroyltri-L-glutamate + L-methionine. Its pathway is amino-acid biosynthesis; L-methionine biosynthesis via de novo pathway; L-methionine from L-homocysteine (MetE route): step 1/1. In terms of biological role, catalyzes the transfer of a methyl group from 5-methyltetrahydrofolate to homocysteine resulting in methionine formation. This Aliivibrio fischeri (strain ATCC 700601 / ES114) (Vibrio fischeri) protein is 5-methyltetrahydropteroyltriglutamate--homocysteine methyltransferase.